The chain runs to 91 residues: Signal recognition particle 19 kDa protein (91 aa).

It belongs to the SRP19 family. As to quaternary structure, part of the signal recognition particle protein translocation system, which is composed of SRP and FtsY. Archaeal SRP consists of a 7S RNA molecule of 300 nucleotides and two protein subunits: SRP54 and SRP19.

Its subcellular location is the cytoplasm. In terms of biological role, involved in targeting and insertion of nascent membrane proteins into the cytoplasmic membrane. Binds directly to 7S RNA and mediates binding of the 54 kDa subunit of the SRP. This chain is Signal recognition particle 19 kDa protein, found in Methanothermobacter thermautotrophicus (strain ATCC 29096 / DSM 1053 / JCM 10044 / NBRC 100330 / Delta H) (Methanobacterium thermoautotrophicum).